The sequence spans 205 residues: Orotate phosphoribosyltransferase (205 aa).

5-phospho-alpha-D-ribose 1-diphosphate is bound at residue Glu-116–Ser-124. The orotate site is built by Thr-120 and Arg-148.

Belongs to the purine/pyrimidine phosphoribosyltransferase family. PyrE subfamily. As to quaternary structure, homodimer. It depends on Mg(2+) as a cofactor.

The catalysed reaction is orotidine 5'-phosphate + diphosphate = orotate + 5-phospho-alpha-D-ribose 1-diphosphate. It participates in pyrimidine metabolism; UMP biosynthesis via de novo pathway; UMP from orotate: step 1/2. Functionally, catalyzes the transfer of a ribosyl phosphate group from 5-phosphoribose 1-diphosphate to orotate, leading to the formation of orotidine monophosphate (OMP). The polypeptide is Orotate phosphoribosyltransferase (Wolinella succinogenes (strain ATCC 29543 / DSM 1740 / CCUG 13145 / JCM 31913 / LMG 7466 / NCTC 11488 / FDC 602W) (Vibrio succinogenes)).